The primary structure comprises 83 residues: Small ribosomal subunit protein bS16 (83 aa).

The protein belongs to the bacterial ribosomal protein bS16 family.

The protein is Small ribosomal subunit protein bS16 of Shewanella woodyi (strain ATCC 51908 / MS32).